A 427-amino-acid polypeptide reads, in one-letter code: Galactose-3-O-sulfotransferase 3 (427 aa).

Residues 1-19 (MPPIFQRLQQATKMSRRKI) are Cytoplasmic-facing. A helical; Signal-anchor for type II membrane protein membrane pass occupies residues 20–40 (LLLVLGCSTLSLLIHQGAQLS). Topologically, residues 41–427 (WYPKLFPLSC…RPIRALRPGH (387 aa)) are lumenal. N-linked (GlcNAc...) asparagine glycans are attached at residues asparagine 90, asparagine 109, asparagine 176, and asparagine 301. The tract at residues 404–427 (MRLRPEPVLDNPPPRPIRALRPGH) is disordered.

The protein belongs to the galactose-3-O-sulfotransferase family. Mg(2+) is required as a cofactor.

It localises to the golgi apparatus. Its subcellular location is the golgi stack membrane. It functions in the pathway protein modification; carbohydrate sulfation. In terms of biological role, transfers a sulfate to position 3 of non-reducing beta-galactosyl residues in N-glycans and core2-branched O-glycans. Has high activity towards Gal-beta-1,4-GlcNAc, Gal-beta-1,4(Fuc-alpha-1,3)GlcNAc and lower activity towards Gal-beta-1,3(Fuc-alpha-1,4)GlcNAc. The polypeptide is Galactose-3-O-sulfotransferase 3 (GAL3ST3) (Bos taurus (Bovine)).